The sequence spans 589 residues: Oligo-1,6-glucosidase IMA3 (589 aa).

Aspartate 215 serves as the catalytic Nucleophile. The active-site Proton donor is the glutamate 277.

Belongs to the glycosyl hydrolase 13 family.

It is found in the cytoplasm. The catalysed reaction is Hydrolysis of (1-&gt;6)-alpha-D-glucosidic linkages in some oligosaccharides produced from starch and glycogen by alpha-amylase, and in isomaltose.. Functionally, alpha-glucosidase with broad substrate specificity for alpha-1,4- and alpha-1,6-glucosides. Not required for isomaltose utilization, but overexpression allows the IMA1 null mutant to grow on isomaltose. The chain is Oligo-1,6-glucosidase IMA3 (IMA3) from Saccharomyces cerevisiae (strain ATCC 204508 / S288c) (Baker's yeast).